The primary structure comprises 438 residues: Enolase (438 aa).

Positions 159 and 168 each coordinate substrate. Glu-211 functions as the Proton donor in the catalytic mechanism. The Mg(2+) site is built by Asp-246, Glu-297, and Asp-322. The substrate site is built by Glu-297 and Asp-322. Lys-347 serves as the catalytic Proton acceptor. Substrate is bound by residues 374 to 377 and Lys-398; that span reads SHRS.

It belongs to the enolase family. In terms of assembly, homodimer. Mg(2+) is required as a cofactor.

It is found in the cytoplasm. The catalysed reaction is (2R)-2-phosphoglycerate = phosphoenolpyruvate + H2O. The protein operates within carbohydrate degradation; glycolysis; pyruvate from D-glyceraldehyde 3-phosphate: step 4/5. The polypeptide is Enolase (enoA) (Penicillium citrinum).